The following is a 67-amino-acid chain: Large ribosomal subunit protein bL35 (67 aa).

The protein belongs to the bacterial ribosomal protein bL35 family.

The chain is Large ribosomal subunit protein bL35 from Acidovorax ebreus (strain TPSY) (Diaphorobacter sp. (strain TPSY)).